Reading from the N-terminus, the 517-residue chain is Crotonobetaine/carnitine--CoA ligase (517 aa).

This sequence belongs to the ATP-dependent AMP-binding enzyme family.

The catalysed reaction is 4-(trimethylamino)butanoate + ATP + CoA = 4-(trimethylamino)butanoyl-CoA + AMP + diphosphate. The enzyme catalyses crotonobetaine + ATP + CoA = crotonobetainyl-CoA + AMP + diphosphate. It carries out the reaction (R)-carnitine + ATP + CoA = (R)-carnitinyl-CoA + AMP + diphosphate. The protein operates within amine and polyamine metabolism; carnitine metabolism. Functionally, catalyzes the transfer of CoA to carnitine, generating the initial carnitinyl-CoA needed for the CaiB reaction cycle. Also has activity toward crotonobetaine and gamma-butyrobetaine. This chain is Crotonobetaine/carnitine--CoA ligase, found in Salmonella typhi.